Reading from the N-terminus, the 444-residue chain is Bystin (444 aa).

Disordered regions lie at residues 1 to 37 (MAKKRDRIVNTQPFISDDASVASSRKRSKVPKTHQKQ) and 53 to 85 (ALAQQKEVADEENAERNPSSAAFAVAGAATAGE). Residues 24–34 (SRKRSKVPKTH) show a composition bias toward basic residues. Positions 73-84 (AAFAVAGAATAG) are enriched in low complexity.

The protein belongs to the bystin family. Component of the 40S pre-ribosome. In terms of tissue distribution, highly expressed in flowers and at lower levels in roots, hypocotyls, stems, leaves, siliques and seeds.

The protein localises to the nucleus. The protein resides in the nucleolus. It is found in the nucleoplasm. In terms of biological role, essential protein required during embryogenesis and pollen development. Required for processing of 20S pre-rRNA precursor and biogenesis of 40S ribosomal subunits. In Arabidopsis thaliana (Mouse-ear cress), this protein is Bystin.